Here is a 251-residue protein sequence, read N- to C-terminus: Protein TK1472 (251 aa).

This sequence belongs to the CinA family.

The polypeptide is Protein TK1472 (Thermococcus kodakarensis (strain ATCC BAA-918 / JCM 12380 / KOD1) (Pyrococcus kodakaraensis (strain KOD1))).